We begin with the raw amino-acid sequence, 289 residues long: Splicing factor C9orf78 homolog (289 aa).

Disordered regions lie at residues 1 to 30 (MRIT…VRLK) and 85 to 111 (RGKD…RRDE). Residues 5–58 (GKTFRRRRADSESEEDEQESEEVRLKLEETREVQNLRKRPNGVSAAALLVGEKV) form an interaction with SNRNP200 region. Ser-15 and Ser-17 each carry phosphoserine. Residue Tyr-147 is modified to Phosphotyrosine. The span at 232-283 (LNAPIRRNKEEPKARPLRVGDTEKPEPERSPPNRKRPANEKATDDYHYEKFK) shows a compositional bias: basic and acidic residues. The disordered stretch occupies residues 232–289 (LNAPIRRNKEEPKARPLRVGDTEKPEPERSPPNRKRPANEKATDDYHYEKFKKMNRRY). Phosphothreonine is present on Thr-253. A Phosphoserine modification is found at Ser-261.

This sequence belongs to the TLS1 family. In terms of assembly, component of the spliceosome. Interacts with SNRNP200; the interaction is direct. Interacts with PRPF8.

The protein localises to the nucleus. It localises to the chromosome. Its subcellular location is the centromere. In terms of biological role, plays a role in pre-mRNA splicing by promoting usage of the upstream 3'-splice site at alternative NAGNAG splice sites; these are sites featuring alternative acceptor motifs separated by only a few nucleotides. May also modulate exon inclusion events. PPlays a role in spliceosomal remodeling by displacing WBP4 from SNRNP200 and may act to inhibit SNRNP200 helicase activity. Binds U5 snRNA. Required for proper chromosome segregation. Not required for splicing of shelterin components. The sequence is that of Splicing factor C9orf78 homolog from Mus musculus (Mouse).